The sequence spans 880 residues: MASKQTPMMEQYQRVKDQYPDAFLFYRLGDFYEMFNEDAVKGAQLLELTLTSRSKSKDNSIPMCGVPHRAVDNYVDILIDKGYKVAICEQMEDPKTTKGMVKREVTRLVTPGTTMDLAGDAARQNNYLTALKQEQGGYNLAYADLSTGELKVTKVSNEAAAINELVNLQTREVVTEPEVSASLLDQLTKRNILRSTQGQVVNQAEVAYLSQDLTDAGQRDVVALLVSYLLTTQKRSLAHLQRAVAYQLSSFMKIDHRSKVNLELTTNLRSGKRQGTLAWLLDETKTAMGSRLLKQWLDRPLLDQAKIERRYDRVQELLDHYFERQNLQEELIKVYDLERLAGRVAYGSVNGRDLIQLKTSLEQVPKIKYILQTLDVPAFDDLEQALDPLEDVAGLIDRAIAPEPPISVTDGGVIRDGYNHQLDEYRGAMQNGKQWIADLQEQERRATGINNLKIGYNHVFGYYIEVTKANIDKLPADRYERKQTLVNAERFATPELKEKESLILGAQDKSTALEYELFVKVREAVKEQIDRLQKLAANLAALDVIQAFAKVAEDYHFVRPSLNHDHQLQIEDGRHPVVEKFMGHQEYVPNDVLMGGDTSILLITGPNMSGKSTYMRQLALTAVMAQMGCFVPAKRAQLPIFDQIFTRIGAADDLVSGESTFMVEMMEANNALQNATADSLILFDEIGRGTATYDGMALAQAIIEFVHNRVGAKTLFSTHYHELTALEGELDHLQNVHVGATEENGELVFLHKVTPGPADKSYGIHVAKLAGMPTPLLTRANQILTSLEGQETAAVPSRGVEPPAPVIEPTPAKEQTPVKEQTTPLVEESSGQLELFATAPVEKKDGKADKLARQVKNLDLMSMTPMDVMNQVYKWQQNLK.

Residue 605–612 (GPNMSGKS) coordinates ATP. Residues 790–829 (QETAAVPSRGVEPPAPVIEPTPAKEQTPVKEQTTPLVEES) form a disordered region. The segment covering 818–829 (VKEQTTPLVEES) has biased composition (polar residues).

Belongs to the DNA mismatch repair MutS family.

Functionally, this protein is involved in the repair of mismatches in DNA. It is possible that it carries out the mismatch recognition step. This protein has a weak ATPase activity. The polypeptide is DNA mismatch repair protein MutS (Limosilactobacillus fermentum (strain NBRC 3956 / LMG 18251) (Lactobacillus fermentum)).